Consider the following 316-residue polypeptide: Beta-ketoacyl-[acyl-carrier-protein] synthase III 1 (316 aa).

Residues cysteine 112 and histidine 243 contribute to the active site. The ACP-binding stretch occupies residues 244 to 248 (QANYR). Asparagine 273 is a catalytic residue.

This sequence belongs to the thiolase-like superfamily. FabH family. As to quaternary structure, homodimer.

Its subcellular location is the cytoplasm. It carries out the reaction malonyl-[ACP] + acetyl-CoA + H(+) = 3-oxobutanoyl-[ACP] + CO2 + CoA. The protein operates within lipid metabolism; fatty acid biosynthesis. Catalyzes the condensation reaction of fatty acid synthesis by the addition to an acyl acceptor of two carbons from malonyl-ACP. Catalyzes the first condensation reaction which initiates fatty acid synthesis and may therefore play a role in governing the total rate of fatty acid production. Possesses both acetoacetyl-ACP synthase and acetyl transacylase activities. Its substrate specificity determines the biosynthesis of branched-chain and/or straight-chain of fatty acids. This chain is Beta-ketoacyl-[acyl-carrier-protein] synthase III 1, found in Vibrio parahaemolyticus serotype O3:K6 (strain RIMD 2210633).